The sequence spans 347 residues: Phosphate acyltransferase (347 aa).

It belongs to the PlsX family. Homodimer. Probably interacts with PlsY.

The protein resides in the cytoplasm. It carries out the reaction a fatty acyl-[ACP] + phosphate = an acyl phosphate + holo-[ACP]. The protein operates within lipid metabolism; phospholipid metabolism. Catalyzes the reversible formation of acyl-phosphate (acyl-PO(4)) from acyl-[acyl-carrier-protein] (acyl-ACP). This enzyme utilizes acyl-ACP as fatty acyl donor, but not acyl-CoA. The protein is Phosphate acyltransferase of Rhizobium meliloti (strain 1021) (Ensifer meliloti).